The following is a 780-amino-acid chain: ATP-dependent 6-phosphofructokinase, muscle type (780 aa).

Thr2 bears the N-acetylthreonine mark. Positions 2–390 (THEEHHATKT…NWEVYKLLAH (389 aa)) are N-terminal catalytic PFK domain 1. ATP contacts are provided by residues Gly25, 88–89 (RC), and 118–121 (GDGS). Asp119 is a Mg(2+) binding site. Ser133 is subject to Phosphoserine. Substrate-binding positions include 164–166 (SID), Arg201, 208–210 (MGR), Glu264, Arg292, and 298–301 (HVQR). Asp166 acts as the Proton acceptor in catalysis. The residue at position 377 (Ser377) is a Phosphoserine. The interval 391-401 (VRPPVSKSGSH) is interdomain linker. The segment at 402–780 (TVAVMNVGAP…TRKRSGEAAV (379 aa)) is C-terminal regulatory PFK domain 2. Residues Arg471 and 528-532 (TVSNN) each bind beta-D-fructose 2,6-bisphosphate. O-linked (GlcNAc) serine glycosylation is present at Ser530. An N6-(2-hydroxyisobutyryl)lysine modification is found at Lys557. Beta-D-fructose 2,6-bisphosphate-binding positions include Arg566, 573-575 (MGG), Glu629, Arg655, and 661-664 (HMQQ). Ser667 carries the post-translational modification Phosphoserine. Arg735 is a beta-D-fructose 2,6-bisphosphate binding site. Ser775 is modified (phosphoserine).

The protein belongs to the phosphofructokinase type A (PFKA) family. ATP-dependent PFK group I subfamily. Eukaryotic two domain clade 'E' sub-subfamily. In terms of assembly, homo- and heterotetramers. Phosphofructokinase (PFK) enzyme functions as a tetramer composed of different combinations of 3 types of subunits, called PFKM (M), PFKL (L) and PFKP (P). The composition of the PFK tetramer differs according to the tissue type it is present in. The kinetic and regulatory properties of the tetrameric enzyme are dependent on the subunit composition, hence can vary across tissues. Interacts (via C-terminus) with HK1 (via N-terminal spermatogenic cell-specific region). Requires Mg(2+) as cofactor. In terms of processing, glcNAcylation decreases enzyme activity.

It localises to the cytoplasm. The catalysed reaction is beta-D-fructose 6-phosphate + ATP = beta-D-fructose 1,6-bisphosphate + ADP + H(+). It functions in the pathway carbohydrate degradation; glycolysis; D-glyceraldehyde 3-phosphate and glycerone phosphate from D-glucose: step 3/4. Its activity is regulated as follows. Allosterically activated by ADP, AMP, or fructose 2,6-bisphosphate, and allosterically inhibited by ATP or citrate. Its function is as follows. Catalyzes the phosphorylation of D-fructose 6-phosphate to fructose 1,6-bisphosphate by ATP, the first committing step of glycolysis. This chain is ATP-dependent 6-phosphofructokinase, muscle type (PFKM), found in Pongo abelii (Sumatran orangutan).